Consider the following 395-residue polypeptide: uncharacterized protein (395 aa).

Over residues 286–306 (SSNKSSESTMTSPLDSASSLH) the composition is skewed to low complexity. The disordered stretch occupies residues 286-395 (SSNKSSESTM…RNDDSGLESV (110 aa)). The span at 350–362 (RPPPPSVHPPIFP) shows a compositional bias: pro residues. Polar residues predominate over residues 364–385 (QTQLFHPPTYSTQRHVTSPNSS).

This is an uncharacterized protein from Caenorhabditis elegans.